Here is a 509-residue protein sequence, read N- to C-terminus: ATP synthase subunit alpha (509 aa).

169 to 176 serves as a coordination point for ATP; sequence GDRQTGKT.

This sequence belongs to the ATPase alpha/beta chains family. As to quaternary structure, F-type ATPases have 2 components, CF(1) - the catalytic core - and CF(0) - the membrane proton channel. CF(1) has five subunits: alpha(3), beta(3), gamma(1), delta(1), epsilon(1). CF(0) has three main subunits: a(1), b(2) and c(9-12). The alpha and beta chains form an alternating ring which encloses part of the gamma chain. CF(1) is attached to CF(0) by a central stalk formed by the gamma and epsilon chains, while a peripheral stalk is formed by the delta and b chains.

Its subcellular location is the cell inner membrane. It carries out the reaction ATP + H2O + 4 H(+)(in) = ADP + phosphate + 5 H(+)(out). Produces ATP from ADP in the presence of a proton gradient across the membrane. The alpha chain is a regulatory subunit. In Methylobacterium nodulans (strain LMG 21967 / CNCM I-2342 / ORS 2060), this protein is ATP synthase subunit alpha.